The chain runs to 455 residues: T-box protein VegT (455 aa).

The T-box DNA-binding region spans 57-230; it reads LWAQFHQEGT…HNPFAKGFRE (174 aa). The span at 229-241 shows a compositional bias: basic and acidic residues; it reads REQERSHKRDDVL. 2 disordered regions span residues 229-276 and 295-360; these read REQE…RVKE and ANQG…PDSD. Residues 308-326 are compositionally biased toward polar residues; that stretch reads GANQEQQVPSSSSNFYNRN.

As to quaternary structure, forms a repression complex on the promoters of the nodal/nr1 and siamois genes with the maternal factors tcf7l1/tcf3 and pouf5.1/oct-25. Interacts (via C-terminus) with tcf7l1/tcf3 (via N-terminus). Also interacts with the other POU-domain transcription factors pou5f1.2/oct-91 and pou5f1.3/oct-60. In terms of tissue distribution, vegetally localized in oocytes and expressed in the presumptive endoderm and mesoderm at early gastrula stage. Expression is down-regulated in the endoderm by the end of gastrulation but maintained in the lateral and ventral mesoderm of the blastopore lip.

The protein localises to the nucleus. In terms of biological role, transcription factor required for both mesoderm and endoderm formation in the embryo; signaling determinants and concentration levels may determine which germ layer is formed. Acts together with beta-catenin to activate genes that are responsible for mesoderm induction including wnt-8, eomes t/bra, siamois, mix1 and sox17. Directly binds to promoter DNA. Patterns the mesoderm along the dorsoventral and posterior axis. Activates siamois gene transcription when alone or in combination with beta-catenin, but inhibits siamois transcription in combination with pou5f1.1/oct-25. This chain is T-box protein VegT, found in Xenopus tropicalis (Western clawed frog).